Reading from the N-terminus, the 145-residue chain is Superoxide dismutase [Mn/Fe] (145 aa).

Fe(3+) is bound by residues His-10 and His-64. 2 residues coordinate Mn(2+): His-10 and His-64.

This sequence belongs to the iron/manganese superoxide dismutase family. The cofactor is Mn(2+). Requires Fe(3+) as cofactor.

The catalysed reaction is 2 superoxide + 2 H(+) = H2O2 + O2. Functionally, destroys superoxide anion radicals which are normally produced within the cells and which are toxic to biological systems. Catalyzes the dismutation of superoxide anion radicals into O2 and H2O2 by successive reduction and oxidation of the transition metal ion at the active site. The chain is Superoxide dismutase [Mn/Fe] (sodA) from Streptococcus canis.